We begin with the raw amino-acid sequence, 580 residues long: E3 ubiquitin-protein ligase TRIM45 (580 aa).

Residues 29-98 form an RING-type zinc finger; that stretch reads CPTCLRLFKV…QIGILCPVCD (70 aa). B box-type zinc fingers lie at residues 130-176 and 186-227; these read GQGL…MVDL and GKPI…YDFT. Zn(2+) contacts are provided by Cys-135, Cys-138, Cys-158, His-162, Cys-191, His-194, Cys-214, and His-219. The stretch at 249-329 forms a coiled coil; that stretch reads VEALEDALAQ…LLADMRTGVE (81 aa). A Filamin repeat occupies 394-497; that stretch reads TQEVDPAQCV…VQGSPFNVTV (104 aa).

This sequence belongs to the TRIM/RBCC family.

The protein resides in the cytoplasm. The protein localises to the nucleus. The catalysed reaction is S-ubiquitinyl-[E2 ubiquitin-conjugating enzyme]-L-cysteine + [acceptor protein]-L-lysine = [E2 ubiquitin-conjugating enzyme]-L-cysteine + N(6)-ubiquitinyl-[acceptor protein]-L-lysine.. Its function is as follows. E3 ubiquitin-protein ligase that plays a role in the regulation of inflammatory response. Mechanistically, mediates the 'Lys-48'-linked polyubiquitination of TAB2, a regulatory protein of the kinase TAK1, leading to its degradation via the proteasomal pathway and inhibition of the TLR-mediated inflammatory immune response. May act as a transcriptional repressor in mitogen-activated protein kinase signaling pathway. This chain is E3 ubiquitin-protein ligase TRIM45 (Trim45), found in Mus musculus (Mouse).